The primary structure comprises 306 residues: UDP-3-O-acyl-N-acetylglucosamine deacetylase (306 aa).

Positions 79, 238, and 242 each coordinate Zn(2+). The active-site Proton donor is histidine 265.

It belongs to the LpxC family. Zn(2+) serves as cofactor.

The enzyme catalyses a UDP-3-O-[(3R)-3-hydroxyacyl]-N-acetyl-alpha-D-glucosamine + H2O = a UDP-3-O-[(3R)-3-hydroxyacyl]-alpha-D-glucosamine + acetate. It participates in glycolipid biosynthesis; lipid IV(A) biosynthesis; lipid IV(A) from (3R)-3-hydroxytetradecanoyl-[acyl-carrier-protein] and UDP-N-acetyl-alpha-D-glucosamine: step 2/6. In terms of biological role, catalyzes the hydrolysis of UDP-3-O-myristoyl-N-acetylglucosamine to form UDP-3-O-myristoylglucosamine and acetate, the committed step in lipid A biosynthesis. The chain is UDP-3-O-acyl-N-acetylglucosamine deacetylase from Shewanella pealeana (strain ATCC 700345 / ANG-SQ1).